Reading from the N-terminus, the 312-residue chain is Beta-ketoacyl-[acyl-carrier-protein] synthase III (312 aa).

Catalysis depends on residues cysteine 112 and histidine 237. Residues 238–242 (QANIR) are ACP-binding. Asparagine 267 is an active-site residue.

The protein belongs to the thiolase-like superfamily. FabH family. As to quaternary structure, homodimer.

It is found in the cytoplasm. It carries out the reaction malonyl-[ACP] + acetyl-CoA + H(+) = 3-oxobutanoyl-[ACP] + CO2 + CoA. Its pathway is lipid metabolism; fatty acid biosynthesis. In terms of biological role, catalyzes the condensation reaction of fatty acid synthesis by the addition to an acyl acceptor of two carbons from malonyl-ACP. Catalyzes the first condensation reaction which initiates fatty acid synthesis and may therefore play a role in governing the total rate of fatty acid production. Possesses both acetoacetyl-ACP synthase and acetyl transacylase activities. Its substrate specificity determines the biosynthesis of branched-chain and/or straight-chain of fatty acids. This chain is Beta-ketoacyl-[acyl-carrier-protein] synthase III, found in Oceanobacillus iheyensis (strain DSM 14371 / CIP 107618 / JCM 11309 / KCTC 3954 / HTE831).